Reading from the N-terminus, the 249-residue chain is ATP synthase subunit a (249 aa).

The next 6 membrane-spanning stretches (helical) occupy residues 30–50, 86–106, 115–135, 142–162, 191–211, and 218–238; these read QSPV…YVGM, FFPF…LGLL, HIAV…IVSL, FFAH…LVPI, MFAA…VLAV, and VALM…FAIL.

It belongs to the ATPase A chain family. In terms of assembly, F-type ATPases have 2 components, CF(1) - the catalytic core - and CF(0) - the membrane proton channel. CF(1) has five subunits: alpha(3), beta(3), gamma(1), delta(1), epsilon(1). CF(0) has three main subunits: a(1), b(2) and c(9-12). The alpha and beta chains form an alternating ring which encloses part of the gamma chain. CF(1) is attached to CF(0) by a central stalk formed by the gamma and epsilon chains, while a peripheral stalk is formed by the delta and b chains.

The protein resides in the cell inner membrane. Functionally, key component of the proton channel; it plays a direct role in the translocation of protons across the membrane. The protein is ATP synthase subunit a of Gluconacetobacter diazotrophicus (strain ATCC 49037 / DSM 5601 / CCUG 37298 / CIP 103539 / LMG 7603 / PAl5).